The following is a 214-amino-acid chain: Phosphatidylserine decarboxylase proenzyme (214 aa).

S182 (schiff-base intermediate with substrate; via pyruvic acid) is an active-site residue. Position 182 is a pyruvic acid (Ser); by autocatalysis (S182).

The protein belongs to the phosphatidylserine decarboxylase family. PSD-A subfamily. As to quaternary structure, heterodimer of a large membrane-associated beta subunit and a small pyruvoyl-containing alpha subunit. It depends on pyruvate as a cofactor. Post-translationally, is synthesized initially as an inactive proenzyme. Formation of the active enzyme involves a self-maturation process in which the active site pyruvoyl group is generated from an internal serine residue via an autocatalytic post-translational modification. Two non-identical subunits are generated from the proenzyme in this reaction, and the pyruvate is formed at the N-terminus of the alpha chain, which is derived from the carboxyl end of the proenzyme. The post-translation cleavage follows an unusual pathway, termed non-hydrolytic serinolysis, in which the side chain hydroxyl group of the serine supplies its oxygen atom to form the C-terminus of the beta chain, while the remainder of the serine residue undergoes an oxidative deamination to produce ammonia and the pyruvoyl prosthetic group on the alpha chain.

The protein localises to the cell membrane. The catalysed reaction is a 1,2-diacyl-sn-glycero-3-phospho-L-serine + H(+) = a 1,2-diacyl-sn-glycero-3-phosphoethanolamine + CO2. The protein operates within phospholipid metabolism; phosphatidylethanolamine biosynthesis; phosphatidylethanolamine from CDP-diacylglycerol: step 2/2. In terms of biological role, catalyzes the formation of phosphatidylethanolamine (PtdEtn) from phosphatidylserine (PtdSer). The protein is Phosphatidylserine decarboxylase proenzyme of Burkholderia vietnamiensis (strain G4 / LMG 22486) (Burkholderia cepacia (strain R1808)).